A 445-amino-acid chain; its full sequence is Trigger factor (445 aa).

The region spanning 162–247 (GDQVTIDAIG…IKAVHTAEPT (86 aa)) is the PPIase FKBP-type domain.

Belongs to the FKBP-type PPIase family. Tig subfamily.

The protein resides in the cytoplasm. The enzyme catalyses [protein]-peptidylproline (omega=180) = [protein]-peptidylproline (omega=0). In terms of biological role, involved in protein export. Acts as a chaperone by maintaining the newly synthesized protein in an open conformation. Functions as a peptidyl-prolyl cis-trans isomerase. The protein is Trigger factor of Rickettsia africae (strain ESF-5).